A 240-amino-acid polypeptide reads, in one-letter code: Keratinocyte-associated protein 3 (240 aa).

A run of 4 helical transmembrane segments spans residues 21–41 (VGLA…VLHG), 63–83 (VISV…LLAS), 94–114 (VLLA…LGLL), and 163–183 (ALAL…LSGY).

The protein belongs to the TMEM54 family. In terms of tissue distribution, expressed in skin, pancreas and keratinocytes.

Its subcellular location is the membrane. The polypeptide is Keratinocyte-associated protein 3 (KRTCAP3) (Homo sapiens (Human)).